We begin with the raw amino-acid sequence, 469 residues long: Glutamate--tRNA ligase 2 (469 aa).

Residues 8 to 18 carry the 'HIGH' region motif; the sequence is PSPTGFLHVGG. Residues 250–254 carry the 'KMSKS' region motif; sequence KLSKR. Lys253 is a binding site for ATP.

It belongs to the class-I aminoacyl-tRNA synthetase family. Glutamate--tRNA ligase type 1 subfamily. Monomer.

The protein localises to the cytoplasm. It catalyses the reaction tRNA(Glu) + L-glutamate + ATP = L-glutamyl-tRNA(Glu) + AMP + diphosphate. Catalyzes the attachment of glutamate to tRNA(Glu) in a two-step reaction: glutamate is first activated by ATP to form Glu-AMP and then transferred to the acceptor end of tRNA(Glu). This is Glutamate--tRNA ligase 2 from Thermotoga petrophila (strain ATCC BAA-488 / DSM 13995 / JCM 10881 / RKU-1).